A 238-amino-acid polypeptide reads, in one-letter code: Ribitol-5-phosphate cytidylyltransferase 1 (238 aa).

CTP contacts are provided by residues 7 to 10 (LAGG) and 81 to 87 (GSDRNDT).

The protein belongs to the IspD/TarI cytidylyltransferase family. TarI subfamily.

The enzyme catalyses D-ribitol 5-phosphate + CTP + H(+) = CDP-L-ribitol + diphosphate. The protein operates within cell wall biogenesis; poly(ribitol phosphate) teichoic acid biosynthesis. Functionally, catalyzes the transfer of the cytidylyl group of CTP to D-ribitol 5-phosphate. This chain is Ribitol-5-phosphate cytidylyltransferase 1, found in Staphylococcus aureus (strain USA300).